The sequence spans 260 residues: NH(3)-dependent NAD(+) synthetase (260 aa).

Position 31–38 (31–38 (GLSGGLDS)) interacts with ATP. Mg(2+) is bound at residue Asp37. Arg112 is a deamido-NAD(+) binding site. Thr132 contributes to the ATP binding site. A Mg(2+)-binding site is contributed by Glu137. The ATP site is built by Lys161 and Ser183.

Belongs to the NAD synthetase family. As to quaternary structure, homodimer.

It catalyses the reaction deamido-NAD(+) + NH4(+) + ATP = AMP + diphosphate + NAD(+) + H(+). It functions in the pathway cofactor biosynthesis; NAD(+) biosynthesis; NAD(+) from deamido-NAD(+) (ammonia route): step 1/1. Catalyzes the ATP-dependent amidation of deamido-NAD to form NAD. Uses ammonia as a nitrogen source. The chain is NH(3)-dependent NAD(+) synthetase from Helicobacter pylori (strain G27).